The chain runs to 544 residues: Baeyer-Villiger monooxygenase (544 aa).

Residues Phe-27, Glu-47, Trp-56, Asp-67, Tyr-73, and Val-119 each contribute to the FAD site.

Belongs to the FAD-binding monooxygenase family. FAD is required as a cofactor.

Its function is as follows. Catalyzes a Baeyer-Villiger oxidation reaction, i.e. the insertion of an oxygen atom into a carbon-carbon bond adjacent to a carbonyl, which converts ketones to esters or lactones using NADPH as an electron donor. Besides cycloalkanones, can use cyclic alpha,beta-unsaturated ketones as substrates, leading to enol-lactones. Can also act on methylated cycloalkanones and methylated cycloalkenones with high enantioselectivity in some cases. The polypeptide is Baeyer-Villiger monooxygenase (Parvibaculum lavamentivorans (strain DS-1 / DSM 13023 / NCIMB 13966)).